The chain runs to 306 residues: UDP-3-O-acyl-N-acetylglucosamine deacetylase (306 aa).

Zn(2+) is bound by residues His-79, His-239, and Asp-243. His-266 serves as the catalytic Proton donor.

It belongs to the LpxC family. Zn(2+) is required as a cofactor.

It carries out the reaction a UDP-3-O-[(3R)-3-hydroxyacyl]-N-acetyl-alpha-D-glucosamine + H2O = a UDP-3-O-[(3R)-3-hydroxyacyl]-alpha-D-glucosamine + acetate. It functions in the pathway glycolipid biosynthesis; lipid IV(A) biosynthesis; lipid IV(A) from (3R)-3-hydroxytetradecanoyl-[acyl-carrier-protein] and UDP-N-acetyl-alpha-D-glucosamine: step 2/6. Its function is as follows. Catalyzes the hydrolysis of UDP-3-O-myristoyl-N-acetylglucosamine to form UDP-3-O-myristoylglucosamine and acetate, the committed step in lipid A biosynthesis. The sequence is that of UDP-3-O-acyl-N-acetylglucosamine deacetylase from Glaesserella parasuis serovar 5 (strain SH0165) (Haemophilus parasuis).